The sequence spans 159 residues: Ribosomal RNA large subunit methyltransferase H (159 aa).

Residues leucine 76, glycine 108, and 127–132 (FGLLTL) each bind S-adenosyl-L-methionine.

Belongs to the RNA methyltransferase RlmH family. Homodimer.

The protein resides in the cytoplasm. It carries out the reaction pseudouridine(1915) in 23S rRNA + S-adenosyl-L-methionine = N(3)-methylpseudouridine(1915) in 23S rRNA + S-adenosyl-L-homocysteine + H(+). In terms of biological role, specifically methylates the pseudouridine at position 1915 (m3Psi1915) in 23S rRNA. This chain is Ribosomal RNA large subunit methyltransferase H, found in Streptococcus pyogenes serotype M3 (strain SSI-1).